Consider the following 59-residue polypeptide: Large ribosomal subunit protein bL32 (59 aa).

The interval 1–20 (MAVPRNRHSNARKNIRRSHH) is disordered.

It belongs to the bacterial ribosomal protein bL32 family.

This chain is Large ribosomal subunit protein bL32 (rpmF), found in Chlamydia muridarum (strain MoPn / Nigg).